The following is a 196-amino-acid chain: Probable malonic semialdehyde reductase RutE (196 aa).

This sequence belongs to the nitroreductase family. HadB/RutE subfamily. FMN serves as cofactor.

The catalysed reaction is 3-hydroxypropanoate + NADP(+) = 3-oxopropanoate + NADPH + H(+). In terms of biological role, may reduce toxic product malonic semialdehyde to 3-hydroxypropionic acid, which is excreted. The polypeptide is Probable malonic semialdehyde reductase RutE (Escherichia coli O8 (strain IAI1)).